Reading from the N-terminus, the 130-residue chain is Large ribosomal subunit protein bL19 (130 aa).

The protein belongs to the bacterial ribosomal protein bL19 family.

Its function is as follows. This protein is located at the 30S-50S ribosomal subunit interface and may play a role in the structure and function of the aminoacyl-tRNA binding site. This is Large ribosomal subunit protein bL19 from Methylorubrum populi (strain ATCC BAA-705 / NCIMB 13946 / BJ001) (Methylobacterium populi).